The following is a 339-amino-acid chain: Cytochrome c biogenesis protein CcsA (339 aa).

The next 7 membrane-spanning stretches (helical) occupy residues 6–26, 37–57, 71–91, 97–117, 142–162, 247–267, and 281–299; these read LEHI…LVFW, IGSL…GLLL, LYES…VSEI, WLGI…TVGL, MMIP…ALLI, IISL…VWVN, and TWAL…IRMI.

It belongs to the CcmF/CycK/Ccl1/NrfE/CcsA family. As to quaternary structure, may interact with Ccs1.

The protein resides in the plastid. Its subcellular location is the chloroplast thylakoid membrane. In terms of biological role, required during biogenesis of c-type cytochromes (cytochrome c6 and cytochrome f) at the step of heme attachment. This chain is Cytochrome c biogenesis protein CcsA, found in Anthoceros angustus (Hornwort).